Here is a 420-residue protein sequence, read N- to C-terminus: Tyrosine--tRNA ligase (420 aa).

Tyrosine 36 is a binding site for L-tyrosine. Residues proline 41–histidine 50 carry the 'HIGH' region motif. Residues tyrosine 170 and glutamine 174 each coordinate L-tyrosine. The 'KMSKS' region signature appears at lysine 231–serine 235. Residue lysine 234 participates in ATP binding. Residues serine 353–lysine 420 form the S4 RNA-binding domain.

Belongs to the class-I aminoacyl-tRNA synthetase family. TyrS type 1 subfamily. Homodimer.

It is found in the cytoplasm. The catalysed reaction is tRNA(Tyr) + L-tyrosine + ATP = L-tyrosyl-tRNA(Tyr) + AMP + diphosphate + H(+). Catalyzes the attachment of tyrosine to tRNA(Tyr) in a two-step reaction: tyrosine is first activated by ATP to form Tyr-AMP and then transferred to the acceptor end of tRNA(Tyr). This Staphylococcus haemolyticus (strain JCSC1435) protein is Tyrosine--tRNA ligase.